The sequence spans 490 residues: Cytochrome P450 2C14 (490 aa).

Cysteine 435 lines the heme pocket.

It belongs to the cytochrome P450 family. It depends on heme as a cofactor.

The protein resides in the endoplasmic reticulum membrane. It is found in the microsome membrane. The catalysed reaction is an organic molecule + reduced [NADPH--hemoprotein reductase] + O2 = an alcohol + oxidized [NADPH--hemoprotein reductase] + H2O + H(+). In terms of biological role, cytochromes P450 are a group of heme-thiolate monooxygenases. In liver microsomes, this enzyme is involved in an NADPH-dependent electron transport pathway. It oxidizes a variety of structurally unrelated compounds, including steroids, fatty acids, and xenobiotics. The sequence is that of Cytochrome P450 2C14 (CYP2C14) from Oryctolagus cuniculus (Rabbit).